A 191-amino-acid chain; its full sequence is Thymidylate kinase (191 aa).

Residue 7–14 coordinates ATP; the sequence is GVDGVGKS.

The protein belongs to the thymidylate kinase family.

It catalyses the reaction dTMP + ATP = dTDP + ADP. Phosphorylation of dTMP to form dTDP in both de novo and salvage pathways of dTTP synthesis. The polypeptide is Thymidylate kinase (Helicobacter pylori (strain HPAG1)).